Reading from the N-terminus, the 280-residue chain is Mevalonyl-coenzyme A hydratase SIDH (280 aa).

A PTS1-type peroxisomal targeting signal motif is present at residues 278–280; it reads SKL.

The protein belongs to the enoyl-CoA hydratase/isomerase family.

Its subcellular location is the peroxisome. It participates in siderophore biosynthesis. Its function is as follows. Mevalonyl-coenzyme A hydratase; part of the gene cluster that mediates the biosynthesis of at least 11 siderophores, including beauverichelin A, dimerumic acid (DA), Na-dimethyl coprogen (NADC), eleutherazine B, ferricrocin (FC), fusarinine A, fusarinine C (FsC), metachelin A, mevalonolactone, rhodotorulic acid (RA) and tenellin. This cocktail of siderophores for iron metabolism is essential for virulence, and more specifically for the fungal virulence in penetrating through the host cuticle. Siderophore synthesis is also involved in conidial germination under iron-deficient conditions. For biosynthesis of fusarinine C, the transacylase SIDF transfers anhydromevalonyl to N(5)-hydroxyornithine. The required anhydromevalonyl-CoA moiety is derived from mevalonate by CoA ligation and dehydration catalyzed by SIDI and sidH respectively. SIDH is not essential for siderophore production, probably due to functional redundancy of this protein family, as there are 15 homologs of SIDH in B.bassiana. The polypeptide is Mevalonyl-coenzyme A hydratase SIDH (Beauveria bassiana (strain ARSEF 2860) (White muscardine disease fungus)).